Consider the following 369-residue polypeptide: 3-methylarginine biosynthesis aminotransferase ArgM (369 aa).

Lys216 carries the post-translational modification N6-(pyridoxal phosphate)lysine.

Belongs to the class-I pyridoxal-phosphate-dependent aminotransferase family. Pyridoxal 5'-phosphate is required as a cofactor.

The enzyme catalyses L-arginine + 2-oxoglutarate = 5-guanidino-2-oxopentanoate + L-glutamate. It carries out the reaction (3R)-5-guanidino-3-methyl-2-oxopentanoate + L-aspartate = (3R)-3-methyl-L-arginine + oxaloacetate. The protein operates within antibiotic biosynthesis. In terms of biological role, aminotransferase involved in the formation of the rare amino acid 3-methylarginine (MeArg), which is incorporated into the peptidyl nucleoside antibiotic arginomycin. Catalyzes two rounds of transamination: the transfer of the amino group from L-arginine to 2-oxoglutarate to give glutamate and 5-guanidino-2-oxopentanoic acid, which will be methylated by ArgN. Then, ArgM specifically catalyzes transamination from the donor L-aspartate to the 5-guanidino-3-methyl-2-oxopentanoic acid produced by ArgN, generating the final product, 3-methylarginine. Cannot use arginine analogs, such as D-arginine, L-homoarginine and N-methylarginine for the first transamination. This Streptomyces arginensis protein is 3-methylarginine biosynthesis aminotransferase ArgM.